A 448-amino-acid polypeptide reads, in one-letter code: Glutamate--tRNA ligase 2 (448 aa).

The 'HIGH' region signature appears at 9–19; it reads PSPTGKLHIGN. Positions 240 to 244 match the 'KMSKS' region motif; that stretch reads KISKR. ATP is bound at residue Lys-243.

Belongs to the class-I aminoacyl-tRNA synthetase family. Glutamate--tRNA ligase type 1 subfamily. Monomer.

The protein resides in the cytoplasm. It carries out the reaction tRNA(Glu) + L-glutamate + ATP = L-glutamyl-tRNA(Glu) + AMP + diphosphate. Its function is as follows. Catalyzes the attachment of glutamate to tRNA(Glu) in a two-step reaction: glutamate is first activated by ATP to form Glu-AMP and then transferred to the acceptor end of tRNA(Glu). This Orientia tsutsugamushi (strain Boryong) (Rickettsia tsutsugamushi) protein is Glutamate--tRNA ligase 2.